The chain runs to 491 residues: Ketol-acid reductoisomerase (NADP(+)) (491 aa).

The KARI N-terminal Rossmann domain occupies 15–208 (AQLGKCRFMG…GGHRAGVLES (194 aa)). NADP(+) is bound by residues 45–48 (CGAQ), arginine 68, arginine 76, serine 78, and 108–110 (DKQ). Residue histidine 132 is part of the active site. Glycine 158 is an NADP(+) binding site. KARI C-terminal knotted domains follow at residues 209–344 (SFVA…TAPQ) and 345–484 (YEGK…MTDM). Aspartate 217, glutamate 221, glutamate 389, and glutamate 393 together coordinate Mg(2+). Serine 414 contributes to the substrate binding site.

This sequence belongs to the ketol-acid reductoisomerase family. Mg(2+) serves as cofactor.

It catalyses the reaction (2R)-2,3-dihydroxy-3-methylbutanoate + NADP(+) = (2S)-2-acetolactate + NADPH + H(+). It carries out the reaction (2R,3R)-2,3-dihydroxy-3-methylpentanoate + NADP(+) = (S)-2-ethyl-2-hydroxy-3-oxobutanoate + NADPH + H(+). The protein operates within amino-acid biosynthesis; L-isoleucine biosynthesis; L-isoleucine from 2-oxobutanoate: step 2/4. It participates in amino-acid biosynthesis; L-valine biosynthesis; L-valine from pyruvate: step 2/4. In terms of biological role, involved in the biosynthesis of branched-chain amino acids (BCAA). Catalyzes an alkyl-migration followed by a ketol-acid reduction of (S)-2-acetolactate (S2AL) to yield (R)-2,3-dihydroxy-isovalerate. In the isomerase reaction, S2AL is rearranged via a Mg-dependent methyl migration to produce 3-hydroxy-3-methyl-2-ketobutyrate (HMKB). In the reductase reaction, this 2-ketoacid undergoes a metal-dependent reduction by NADPH to yield (R)-2,3-dihydroxy-isovalerate. The polypeptide is Ketol-acid reductoisomerase (NADP(+)) (Shigella dysenteriae serotype 1 (strain Sd197)).